A 102-amino-acid chain; its full sequence is Thioredoxin (102 aa).

A Thioredoxin domain is found at 1–102 (MVKVVSAENF…SLIRLINQHS (102 aa)). Cysteine 28 and cysteine 31 are oxidised to a cystine.

This sequence belongs to the thioredoxin family.

Its function is as follows. Participates in various redox reactions through the reversible oxidation of its active center dithiol to a disulfide and catalyzes dithiol-disulfide exchange reactions. This is Thioredoxin (trxA) from Chlamydia caviae (strain ATCC VR-813 / DSM 19441 / 03DC25 / GPIC) (Chlamydophila caviae).